The sequence spans 515 residues: Bifunctional purine biosynthesis protein PurH (515 aa).

An MGS-like domain is found at 1-145; sequence MTKRALISVS…KNHASVTVVV (145 aa).

Belongs to the PurH family.

The catalysed reaction is (6R)-10-formyltetrahydrofolate + 5-amino-1-(5-phospho-beta-D-ribosyl)imidazole-4-carboxamide = 5-formamido-1-(5-phospho-D-ribosyl)imidazole-4-carboxamide + (6S)-5,6,7,8-tetrahydrofolate. The enzyme catalyses IMP + H2O = 5-formamido-1-(5-phospho-D-ribosyl)imidazole-4-carboxamide. Its pathway is purine metabolism; IMP biosynthesis via de novo pathway; 5-formamido-1-(5-phospho-D-ribosyl)imidazole-4-carboxamide from 5-amino-1-(5-phospho-D-ribosyl)imidazole-4-carboxamide (10-formyl THF route): step 1/1. It participates in purine metabolism; IMP biosynthesis via de novo pathway; IMP from 5-formamido-1-(5-phospho-D-ribosyl)imidazole-4-carboxamide: step 1/1. This chain is Bifunctional purine biosynthesis protein PurH, found in Streptococcus pyogenes serotype M3 (strain ATCC BAA-595 / MGAS315).